The chain runs to 713 residues: MATSSVSKGCFVFKPNFKKRKISVPIEDYFNKGKNESEDSKLRFETYHLMWEQMKCETERLQEELNKNLFDSLIEFLQKSHTGFKKNSGDWGHQIKHREIPVAALVLGVNVTDHDLIFRSLTEALQNNVTPYVVSLQAKDCPDMKHFLQKLISQLMACCVDAKPKEKESIQVTQKMTHCSMDPLSSWYMTVTQKTHPKISGKKRTTSSKWQSPPVVLILKDMESFTTKILQDFIIISSQHLHEFPLILIFGIATSPIIIHRLLPHAVSSLLCIELFQSLPCKEHLTTVLDKLLLTAQFPFKISEKVLQILTNIFLYHDFSIQNFVKGLQLSLLEHFYSQPLSVLCCSLPEAKRRINFLSAHQCENIRRLPSFRRYVEKQVSEKQVALLTNERFLKEETQSLLENLHVYHTNYFLVLRCLHNFTSSLPKYPLGRQIRELYCTCLEKNIWDSEEYASALQLLRMLARDDLMTILQKCFKVFKSSSEKQLGSTAKRIEEFLAQFQSLDADAKEEEDASGSQPKGLQKTDLYHLQKSLLEMKELRRTSKKQTRFEVLREKVVNFIDCLVREYLLPPETQPLHEVVYFSAAHTLREHLNAAPRIALHTALNDPYFYIKNEALKSEEGCIPNIAPDICIAYKLHLECSRLINLVDWSEAFATVVTAAEKMESNSATTEEMNEIIHARFIRAVSELELLGFIKPTKQKTDHVARLTWGGC.

A phosphoserine mark is found at serine 23 and serine 517.

This sequence belongs to the ORC3 family. In terms of assembly, component of ORC, a complex composed of at least 6 subunits: ORC1, ORC2, ORC3, ORC4, ORC5 and ORC6. ORC is regulated in a cell-cycle dependent manner. It is sequentially assembled at the exit from anaphase of mitosis and disassembled as cells enter S phase.

Its subcellular location is the nucleus. Component of the origin recognition complex (ORC) that binds origins of replication. DNA-binding is ATP-dependent. The specific DNA sequences that define origins of replication have not been identified yet. ORC is required to assemble the pre-replication complex necessary to initiate DNA replication. Binds histone H3 and H4 trimethylation marks H3K9me3, H3K27me3 and H4K20me3. In Spermophilus citellus (European ground squirrel), this protein is Origin recognition complex subunit 3 (ORC3).